The following is a 164-amino-acid chain: Phosphopantetheine adenylyltransferase (164 aa).

Substrate is bound at residue Ser10. Residues 10-11 and His18 contribute to the ATP site; that span reads SF. The substrate site is built by Lys42, Met74, and Arg88. ATP is bound by residues 89 to 91, Glu99, and 124 to 130; these read GLR and YFFVSAR.

Belongs to the bacterial CoaD family. Homohexamer. It depends on Mg(2+) as a cofactor.

It is found in the cytoplasm. The enzyme catalyses (R)-4'-phosphopantetheine + ATP + H(+) = 3'-dephospho-CoA + diphosphate. The protein operates within cofactor biosynthesis; coenzyme A biosynthesis; CoA from (R)-pantothenate: step 4/5. Reversibly transfers an adenylyl group from ATP to 4'-phosphopantetheine, yielding dephospho-CoA (dPCoA) and pyrophosphate. The sequence is that of Phosphopantetheine adenylyltransferase from Anaeromyxobacter dehalogenans (strain 2CP-1 / ATCC BAA-258).